Consider the following 273-residue polypeptide: 2-dehydro-3-deoxyphosphooctonate aldolase (273 aa).

It belongs to the KdsA family.

It localises to the cytoplasm. The catalysed reaction is D-arabinose 5-phosphate + phosphoenolpyruvate + H2O = 3-deoxy-alpha-D-manno-2-octulosonate-8-phosphate + phosphate. It participates in carbohydrate biosynthesis; 3-deoxy-D-manno-octulosonate biosynthesis; 3-deoxy-D-manno-octulosonate from D-ribulose 5-phosphate: step 2/3. Its pathway is bacterial outer membrane biogenesis; lipopolysaccharide biosynthesis. The protein is 2-dehydro-3-deoxyphosphooctonate aldolase of Citrifermentans bemidjiense (strain ATCC BAA-1014 / DSM 16622 / JCM 12645 / Bem) (Geobacter bemidjiensis).